The following is a 273-amino-acid chain: Ribosomal RNA small subunit methyltransferase A (273 aa).

Positions 18, 20, 45, 66, 91, and 113 each coordinate S-adenosyl-L-methionine.

This sequence belongs to the class I-like SAM-binding methyltransferase superfamily. rRNA adenine N(6)-methyltransferase family. RsmA subfamily.

The protein localises to the cytoplasm. The catalysed reaction is adenosine(1518)/adenosine(1519) in 16S rRNA + 4 S-adenosyl-L-methionine = N(6)-dimethyladenosine(1518)/N(6)-dimethyladenosine(1519) in 16S rRNA + 4 S-adenosyl-L-homocysteine + 4 H(+). In terms of biological role, specifically dimethylates two adjacent adenosines (A1518 and A1519) in the loop of a conserved hairpin near the 3'-end of 16S rRNA in the 30S particle. May play a critical role in biogenesis of 30S subunits. This chain is Ribosomal RNA small subunit methyltransferase A, found in Escherichia fergusonii (strain ATCC 35469 / DSM 13698 / CCUG 18766 / IAM 14443 / JCM 21226 / LMG 7866 / NBRC 102419 / NCTC 12128 / CDC 0568-73).